Consider the following 237-residue polypeptide: MGRKSSKAKEKKQKRLEERAAMDAVCAKVDAANRLGDPLEAFPVFKKYDRNGLNVSIECKRVSGLEPATVDWAFDLTKTNMQTMYEQSEWGWKDREKREEMTDDRAWYLIAWENSSVPVAFSHFRFDVECGDEVLYCYEVQLESKVRRKGLGKFLIQILQLMANSTQMKKVMLTVFKHNHGAYQFFREALQFEIDDSSPSMSGCCGEDCSYEILSRRTKFGDSHHSHAGGHCGGCCH.

The N-myristoyl glycine moiety is linked to residue glycine 2. In terms of domain architecture, N-acetyltransferase spans 63 to 216 (SGLEPATVDW…EDCSYEILSR (154 aa)). Substrate contacts are provided by residues tyrosine 85, 127–129 (DVE), and tyrosine 138. Acetyl-CoA-binding positions include 140 to 142 (VQL) and 148 to 153 (RKGLGK). Threonine 174 is a substrate binding site. An acetyl-CoA-binding site is contributed by asparagine 179. The substrate site is built by serine 197 and tyrosine 211.

Belongs to the acetyltransferase family. NAA40 subfamily. In terms of tissue distribution, widely expressed; with the highest expression level in liver and the lowest expression in brain (at protein level).

The protein localises to the cytoplasm. Its subcellular location is the nucleus. It catalyses the reaction N-terminal L-seryl-[histone H4] + acetyl-CoA = N-terminal N(alpha)-acetyl-L-seryl-[histone H4] + CoA + H(+). The enzyme catalyses N-terminal L-seryl-[histone H2A] + acetyl-CoA = N-terminal N(alpha)-acetyl-L-seryl-[histone H2A] + CoA + H(+). In terms of biological role, N-alpha-acetyltransferase that specifically mediates the acetylation of the N-terminal residues of histones H4 and H2A. In contrast to other N-alpha-acetyltransferase, has a very specific selectivity for histones H4 and H2A N-terminus and specifically recognizes the 'Ser-Gly-Arg-Gly sequence'. Acts as a negative regulator of apoptosis. May play a role in hepatic lipid metabolism. This is N-alpha-acetyltransferase 40 from Homo sapiens (Human).